We begin with the raw amino-acid sequence, 128 residues long: Large ribosomal subunit protein mL52 (128 aa).

Residues 1 to 28 (MLQIAKLCLATSGRITAQRYVAVTTARA) constitute a mitochondrion transit peptide.

The protein belongs to the mitochondrion-specific ribosomal protein mL52 family. Component of the mitochondrial ribosome large subunit (39S) which comprises a 16S rRNA and about 50 distinct proteins.

The protein resides in the mitochondrion. The chain is Large ribosomal subunit protein mL52 (mRpL52) from Drosophila pseudoobscura pseudoobscura (Fruit fly).